The chain runs to 1324 residues: Sal-like protein 1 (1324 aa).

The segment at 1–42 (MSRRKQAKPQHFQSDPEVASLPRRDGDTEKGQPSRPTKSKDA) is disordered. A compositionally biased stretch (basic and acidic residues) spans 22 to 42 (PRRDGDTEKGQPSRPTKSKDA). Residues 43 to 65 (HVCGRCCAEFFELSDLLLHKKNC) form a C2H2-type 1; atypical zinc finger. 4 disordered regions span residues 77–102 (NPAS…NDTV), 108–127 (VDCS…SMEV), 132–172 (ANKS…TSAI), and 317–336 (PPIQ…SNSG). Basic and acidic residues predominate over residues 113 to 124 (LSEHNGLDREES). Positions 135-158 (SGSGTSSGSHSSTAPSSSSSSSSS) are enriched in low complexity. The span at 321–336 (LPQSSSGNTIIPSNSG) shows a compositional bias: polar residues. Residue Lys439 forms a Glycyl lysine isopeptide (Lys-Gly) (interchain with G-Cter in SUMO2) linkage. 2 C2H2-type zinc fingers span residues 449 to 471 (HKCR…LRSH) and 477 to 499 (FKCN…FQRH). A disordered region spans residues 577–646 (PIPISHSATS…ASSSVLSSPA (70 aa)). A phosphoserine mark is found at Ser590, Ser593, and Ser595. The span at 633-646 (SVPTASSSVLSSPA) shows a compositional bias: low complexity. Glycyl lysine isopeptide (Lys-Gly) (interchain with G-Cter in SUMO2) cross-links involve residues Lys673, Lys690, and Lys701. C2H2-type zinc fingers lie at residues 706–728 (NECI…YRTH), 734–756 (FKCK…YSVH), and 766–788 (HSCP…IRMH). Disordered regions lie at residues 790–856 (GGQI…SSPL) and 894–963 (EGDV…LSPT). A compositionally biased stretch (polar residues) spans 802 to 811 (YSESMESDTG). Over residues 820-833 (DLDNFSDENMEDCP) the composition is skewed to acidic residues. The segment covering 843–856 (SADASQDSLSSSPL) has biased composition (low complexity). Over residues 899 to 936 (TNDSSSVGGDMESQSAGSPAISESTSSMQALSPSNSTQ) the composition is skewed to polar residues. Positions 937 to 949 (EFHKSPSIEEKPQ) are enriched in basic and acidic residues. Phosphoserine is present on residues Ser941 and Ser943. Residues Lys947 and Lys982 each participate in a glycyl lysine isopeptide (Lys-Gly) (interchain with G-Cter in SUMO2) cross-link. 2 consecutive C2H2-type zinc fingers follow at residues 1001-1023 (TACD…YRSH) and 1029-1051 (FICT…MLTH). Lys1086 participates in a covalent cross-link: Glycyl lysine isopeptide (Lys-Gly) (interchain with G-Cter in SUMO2). The disordered stretch occupies residues 1095-1120 (VSPQDSKDTPTSHVPSGPLSSSATSP). The span at 1105–1119 (TSHVPSGPLSSSATS) shows a compositional bias: polar residues. C2H2-type zinc fingers lie at residues 1134 to 1156 (HYCN…ERTH) and 1162 to 1184 (FACT…MGTH). Residues Lys1219, Lys1299, and Lys1319 each participate in a glycyl lysine isopeptide (Lys-Gly) (interchain with G-Cter in SUMO2) cross-link.

It belongs to the sal C2H2-type zinc-finger protein family. May associate with NuRD histone deacetylase complex (HDAC). Interacts with components of HDAC complex including HDAC1, HDAC2, RBBP4, RBPP7, MTA1 and MTA2. Interacts with CCNQ. Interacts with NSD2 (via PHD-type zinc fingers 1, 2 and 3). In terms of tissue distribution, highest levels in kidney. Lower levels in adult brain (enriched in corpus callosum, lower expression in substantia nigra) and liver.

It is found in the nucleus. Functionally, transcriptional repressor involved in organogenesis. Plays an essential role in ureteric bud invasion during kidney development. The protein is Sal-like protein 1 (SALL1) of Homo sapiens (Human).